A 372-amino-acid chain; its full sequence is NADH-quinone oxidoreductase subunit D (372 aa).

This sequence belongs to the complex I 49 kDa subunit family. As to quaternary structure, NDH-1 is composed of 14 different subunits. Subunits NuoB, C, D, E, F, and G constitute the peripheral sector of the complex.

Its subcellular location is the cell inner membrane. It catalyses the reaction a quinone + NADH + 5 H(+)(in) = a quinol + NAD(+) + 4 H(+)(out). Functionally, NDH-1 shuttles electrons from NADH, via FMN and iron-sulfur (Fe-S) centers, to quinones in the respiratory chain. The immediate electron acceptor for the enzyme in this species is believed to be ubiquinone. Couples the redox reaction to proton translocation (for every two electrons transferred, four hydrogen ions are translocated across the cytoplasmic membrane), and thus conserves the redox energy in a proton gradient. This Desulfotalea psychrophila (strain LSv54 / DSM 12343) protein is NADH-quinone oxidoreductase subunit D.